The chain runs to 338 residues: D-erythrose-4-phosphate dehydrogenase (338 aa).

11 to 12 provides a ligand contact to NAD(+); sequence RI. Substrate is bound by residues 153–155, Arg199, 212–213, and Arg235; these read SCT and TK. Cys154 acts as the Nucleophile in catalysis. Asn317 is a binding site for NAD(+).

It belongs to the glyceraldehyde-3-phosphate dehydrogenase family. Epd subfamily. Homotetramer.

The protein resides in the cytoplasm. The catalysed reaction is D-erythrose 4-phosphate + NAD(+) + H2O = 4-phospho-D-erythronate + NADH + 2 H(+). It participates in cofactor biosynthesis; pyridoxine 5'-phosphate biosynthesis; pyridoxine 5'-phosphate from D-erythrose 4-phosphate: step 1/5. Functionally, catalyzes the NAD-dependent conversion of D-erythrose 4-phosphate to 4-phosphoerythronate. In Shewanella oneidensis (strain ATCC 700550 / JCM 31522 / CIP 106686 / LMG 19005 / NCIMB 14063 / MR-1), this protein is D-erythrose-4-phosphate dehydrogenase.